Reading from the N-terminus, the 353-residue chain is Cruciform cutting endonuclease 1, mitochondrial (353 aa).

Residues Asp-293 and Asp-294 each contribute to the Mg(2+) site.

In terms of assembly, homodimer. Mg(2+) is required as a cofactor.

It is found in the mitochondrion. The catalysed reaction is Endonucleolytic cleavage at a junction such as a reciprocal single-stranded crossover between two homologous DNA duplexes (Holliday junction).. Capable of resolving Holliday junctions. Specific for 4-way junctions. Seems to be important for the maintenance of mitochondrial DNA. Cleaves fixed junctions at the point of strand exchange. Cleaves after 5'-CT-3' sequence. The chain is Cruciform cutting endonuclease 1, mitochondrial (CCE1) from Saccharomyces cerevisiae (strain ATCC 204508 / S288c) (Baker's yeast).